A 365-amino-acid polypeptide reads, in one-letter code: Histidinol-phosphate aminotransferase (365 aa).

Lysine 221 is modified (N6-(pyridoxal phosphate)lysine).

Belongs to the class-II pyridoxal-phosphate-dependent aminotransferase family. Histidinol-phosphate aminotransferase subfamily. In terms of assembly, homodimer. Pyridoxal 5'-phosphate serves as cofactor.

It catalyses the reaction L-histidinol phosphate + 2-oxoglutarate = 3-(imidazol-4-yl)-2-oxopropyl phosphate + L-glutamate. The protein operates within amino-acid biosynthesis; L-histidine biosynthesis; L-histidine from 5-phospho-alpha-D-ribose 1-diphosphate: step 7/9. The sequence is that of Histidinol-phosphate aminotransferase from Nitrobacter hamburgensis (strain DSM 10229 / NCIMB 13809 / X14).